A 458-amino-acid polypeptide reads, in one-letter code: Chromosomal replication initiator protein DnaA (458 aa).

The domain I, interacts with DnaA modulators stretch occupies residues 1–79 (MSLAIWQECL…ENPNHSVKIR (79 aa)). The interval 79–120 (RLMVGNVSSVEKKPAKQIPTQAPLTNQPWEGESKAHRVPHKS) is domain II. Residues 92–114 (PAKQIPTQAPLTNQPWEGESKAH) form a disordered region. The span at 96-106 (IPTQAPLTNQP) shows a compositional bias: polar residues. The interval 121-338 (NLIKKYTFDN…GAIANISAKA (218 aa)) is domain III, AAA+ region. The ATP site is built by Gly-165, Gly-167, Lys-168, and Thr-169. Residues 339 to 458 (QFTGQGITIS…YKILIRTLSM (120 aa)) are domain IV, binds dsDNA.

Belongs to the DnaA family. Oligomerizes as a right-handed, spiral filament on DNA at oriC.

Its subcellular location is the cytoplasm. In terms of biological role, plays an essential role in the initiation and regulation of chromosomal replication. ATP-DnaA binds to the origin of replication (oriC) to initiate formation of the DNA replication initiation complex once per cell cycle. Binds the DnaA box (a 9 base pair repeat at the origin) and separates the double-stranded (ds)DNA. Forms a right-handed helical filament on oriC DNA; dsDNA binds to the exterior of the filament while single-stranded (ss)DNA is stabiized in the filament's interior. The ATP-DnaA-oriC complex binds and stabilizes one strand of the AT-rich DNA unwinding element (DUE), permitting loading of DNA polymerase. After initiation quickly degrades to an ADP-DnaA complex that is not apt for DNA replication. Binds acidic phospholipids. In Psychromonas ingrahamii (strain DSM 17664 / CCUG 51855 / 37), this protein is Chromosomal replication initiator protein DnaA.